The following is a 139-amino-acid chain: D-ribose pyranase (139 aa).

Residue histidine 20 is the Proton donor of the active site. Substrate is bound by residues aspartate 28, histidine 106, and 128–130; that span reads YAN.

The protein belongs to the RbsD / FucU family. RbsD subfamily. Homodecamer.

Its subcellular location is the cytoplasm. It carries out the reaction beta-D-ribopyranose = beta-D-ribofuranose. The protein operates within carbohydrate metabolism; D-ribose degradation; D-ribose 5-phosphate from beta-D-ribopyranose: step 1/2. Functionally, catalyzes the interconversion of beta-pyran and beta-furan forms of D-ribose. The chain is D-ribose pyranase from Escherichia coli O139:H28 (strain E24377A / ETEC).